The sequence spans 134 residues: Large-conductance mechanosensitive channel (134 aa).

2 consecutive transmembrane segments (helical) span residues 16–36 and 76–96; these read VVDM…VSSF and GVFL…FIAV.

The protein belongs to the MscL family. In terms of assembly, homopentamer.

The protein localises to the cell inner membrane. Channel that opens in response to stretch forces in the membrane lipid bilayer. May participate in the regulation of osmotic pressure changes within the cell. The polypeptide is Large-conductance mechanosensitive channel (Thioalkalivibrio sulfidiphilus (strain HL-EbGR7)).